A 158-amino-acid polypeptide reads, in one-letter code: SsrA-binding protein (158 aa).

A compositionally biased stretch (basic and acidic residues) spans 133–147; the sequence is KRQALRERQDNREAQ. A disordered region spans residues 133 to 158; that stretch reads KRQALRERQDNREAQRAMASRKHLGE.

The protein belongs to the SmpB family.

The protein resides in the cytoplasm. Required for rescue of stalled ribosomes mediated by trans-translation. Binds to transfer-messenger RNA (tmRNA), required for stable association of tmRNA with ribosomes. tmRNA and SmpB together mimic tRNA shape, replacing the anticodon stem-loop with SmpB. tmRNA is encoded by the ssrA gene; the 2 termini fold to resemble tRNA(Ala) and it encodes a 'tag peptide', a short internal open reading frame. During trans-translation Ala-aminoacylated tmRNA acts like a tRNA, entering the A-site of stalled ribosomes, displacing the stalled mRNA. The ribosome then switches to translate the ORF on the tmRNA; the nascent peptide is terminated with the 'tag peptide' encoded by the tmRNA and targeted for degradation. The ribosome is freed to recommence translation, which seems to be the essential function of trans-translation. This Leifsonia xyli subsp. xyli (strain CTCB07) protein is SsrA-binding protein.